Here is a 104-residue protein sequence, read N- to C-terminus: Larval cuticle protein 65Ab1 (104 aa).

Positions 1–18 are cleaved as a signal peptide; it reads MKFLIVFVALFAMAVARP. A Chitin-binding type R&amp;R domain is found at 32–102; the sequence is PEKWSSDVET…PQGAHLPVAP (71 aa).

In terms of biological role, component of the cuticle of the larva. This is Larval cuticle protein 65Ab1 from Drosophila melanogaster (Fruit fly).